The primary structure comprises 63 residues: Large ribosomal subunit protein uL30 (63 aa).

The protein belongs to the universal ribosomal protein uL30 family. In terms of assembly, part of the 50S ribosomal subunit.

This is Large ribosomal subunit protein uL30 from Rickettsia africae (strain ESF-5).